The primary structure comprises 526 residues: Glutamyl-tRNA(Gln) amidotransferase subunit A, mitochondrial (526 aa).

Residues K76 and S171 each act as charge relay system in the active site. S195 serves as the catalytic Acyl-ester intermediate.

It belongs to the amidase family. GatA subfamily. Subunit of the heterotrimeric GatCAB amidotransferase (AdT) complex, composed of A (QRSL1), B (GATB) and C (GATC) subunits.

Its subcellular location is the mitochondrion. The enzyme catalyses L-glutamyl-tRNA(Gln) + L-glutamine + ATP + H2O = L-glutaminyl-tRNA(Gln) + L-glutamate + ADP + phosphate + H(+). Its function is as follows. Allows the formation of correctly charged Gln-tRNA(Gln) through the transamidation of misacylated Glu-tRNA(Gln) in the mitochondria. The reaction takes place in the presence of glutamine and ATP through an activated gamma-phospho-Glu-tRNA(Gln). This is Glutamyl-tRNA(Gln) amidotransferase subunit A, mitochondrial from Canis lupus familiaris (Dog).